A 494-amino-acid chain; its full sequence is Syntaphilin (494 aa).

The disordered stretch occupies residues 1–75 (MAMSLPGSRR…GIKPPTPEQY (75 aa)). A compositionally biased stretch (low complexity) spans 7–49 (GSRRTSAGSRRRTSPPVSVRDAYGTSSLSSSSNSGSYKGSDSS). A coiled-coil region spans residues 79–161 (LQQKEVCIRH…VKNNLIDKDK (83 aa)). Disordered regions lie at residues 191–246 (MAKE…SGFA) and 338–398 (CGTD…GQSV). Phosphoserine is present on residues Ser-200 and Ser-204. Over residues 207–217 (RSLTRSSTYTK) the composition is skewed to polar residues. The residue at position 214 (Thr-214) is a Phosphothreonine. Position 219 is a phosphoserine (Ser-219). The span at 230–246 (GDPSSGSAEDGADSGFA) shows a compositional bias: low complexity. Over residues 344 to 353 (SGDRCPELDA) the composition is skewed to basic and acidic residues. The helical transmembrane segment at 425-444 (YIVDLLAVVVPAVPTVAWLC) threads the bilayer.

Binds to STX1A. Interacts with DNM1; this interaction inhibits the binding of DNM1 to AMPH and DNM1-receptor-mediated endocytosis. In terms of tissue distribution, brain specific. Found in synapses.

Its subcellular location is the membrane. It localises to the synapse. The protein resides in the synaptosome. Inhibits SNARE complex formation by absorbing free STX1A. In Homo sapiens (Human), this protein is Syntaphilin.